A 187-amino-acid chain; its full sequence is Large ribosomal subunit protein uL22 (187 aa).

The segment at 161 to 187 (APTDDAPAKKKLSKKKLARQKEKMMRE) is disordered. Positions 169–178 (KKKLSKKKLA) are enriched in basic residues.

It belongs to the universal ribosomal protein uL22 family.

The polypeptide is Large ribosomal subunit protein uL22 (RpL17) (Bombyx mori (Silk moth)).